The following is a 441-amino-acid chain: DILAAFRVTPQPGVPPEEAGAAVAAESSTGTWTTVWTDGLTSLDRYKGRCYDIEPVPGEXXXXXXXXXXXXDLFEEGSVTNMFTSXVGNVFGFXXXRALRLEDLRIPPAYTKTFQGPPHGIQVERDKLNKYGRPILGCTIKPKLGLSAKNYGRAVYECLRGGLDFTKDDENVNSQPFMRWRDRFLFCAEAIYKSQAETGEIKGHYLNATAGTCEEMIKRAVFARELGVPIVMHDYLTGGFTANTTLAHYCRDNGLLFHIHRAMHAVIDRQKNHGMHFRVLAKALRMSGGDHVHSGTVVGKLEGERDITLGFVDLLRDDYVEKDRSRGIYFTQDWVSLPGVLPVASGGIHVWHMPALTEIFGDDSVLQFGGGTLGHPWGNRPGAXXNRVALEACVKARNEGRDLAREGNEIIREAAKWSPELAAACEVWKEIKFEFEAMDTI.

Substrate is bound by residues N89 and T139. The active-site Proton acceptor is K141. Position 143 (K143) interacts with substrate. 3 residues coordinate Mg(2+): K167, D169, and E170. N6-carboxylysine is present on K167. The Proton acceptor role is filled by H260. Residues R261, H293, and S345 each coordinate substrate.

The protein belongs to the RuBisCO large chain family. Type I subfamily. In terms of assembly, heterohexadecamer of 8 large chains and 8 small chains; disulfide-linked. The disulfide link is formed within the large subunit homodimers. Mg(2+) serves as cofactor. In terms of processing, the disulfide bond which can form in the large chain dimeric partners within the hexadecamer appears to be associated with oxidative stress and protein turnover.

Its subcellular location is the plastid. The protein resides in the chloroplast. The catalysed reaction is 2 (2R)-3-phosphoglycerate + 2 H(+) = D-ribulose 1,5-bisphosphate + CO2 + H2O. The enzyme catalyses D-ribulose 1,5-bisphosphate + O2 = 2-phosphoglycolate + (2R)-3-phosphoglycerate + 2 H(+). In terms of biological role, ruBisCO catalyzes two reactions: the carboxylation of D-ribulose 1,5-bisphosphate, the primary event in carbon dioxide fixation, as well as the oxidative fragmentation of the pentose substrate in the photorespiration process. Both reactions occur simultaneously and in competition at the same active site. The sequence is that of Ribulose bisphosphate carboxylase large chain from Viola sororia (Woolly blue violet).